The chain runs to 226 residues: Matrix protein (226 aa).

Residues 2–4 carry the dynamin binding motif; it reads KSL. Residues 28–31 carry the PPXY motif motif; that stretch reads PPSY. The short motif at 40–43 is the PTAP/PSAP motif element; it reads PSAP.

This sequence belongs to the vesiculoviruses matrix protein family. In terms of assembly, homomultimer. Interacts with viral nucleocapsid; this interaction contributes to the virion assembly. Interacts with the viral envelope glycoprotein; this interaction contributes to the virion assembly. Interacts with host RAE1-NUP98 complex. Interacts with host NEDD4 and TSG101. Interacts with host dynamin. Interacts with host NDUFAF4; the interaction inhibits viral propagation and is independent of interferon activation. Interacts with host GTF2H5; the interaction may inhibit host transcription. Phosphorylated by host.

It is found in the virion. It localises to the host endomembrane system. The protein resides in the host nucleus membrane. The protein localises to the host nucleus. Its subcellular location is the host cytoplasm. In terms of biological role, forms a double layer around the helical nucleocapsid, the inner matrix layer binding to the N helix and the outer matrix layer binding to the envelope glycoprotein. Plays a major role in assembly and budding of virion, by recruiting cellular partners of the ESCRT complexes that play a key role in releasing the budding particle from the host membrane. Condensates the ribonucleocapsid core during virus assembly. Inhibits the host mRNA nuclear export thereby inducing the shut off of cellular transcription and preventing the interferon signaling and the establishment of antiviral state in infected cells. This shutoff presumably inhibits interferon signaling and thus establishment of antiviral state in virus infected cells. Induces cell-rounding, cytoskeleton disorganization and apoptosis in infected cell. Inhibits host transcription, possibly through interaction with host DNA repair factor IIH/TFIIH GTF2H5 subunit. The chain is Matrix protein (M) from Isfahan virus (ISFV).